The primary structure comprises 331 residues: Ketol-acid reductoisomerase (NADP(+)) (331 aa).

Positions 4–183 (ATIYYDDDAE…GCTRAGVVET (180 aa)) constitute a KARI N-terminal Rossmann domain. NADP(+)-binding positions include 27 to 30 (YGSQ), Arg50, Ser53, Ser55, and 85 to 88 (DTVQ). Residue His109 is part of the active site. Residue Gly135 participates in NADP(+) binding. In terms of domain architecture, KARI C-terminal knotted spans 184–329 (TFREETETDL…EDLRALFAWG (146 aa)). Mg(2+) is bound by residues Asp192, Glu196, Glu228, and Glu232. Ser253 contacts substrate.

Belongs to the ketol-acid reductoisomerase family. Requires Mg(2+) as cofactor.

It carries out the reaction (2R)-2,3-dihydroxy-3-methylbutanoate + NADP(+) = (2S)-2-acetolactate + NADPH + H(+). It catalyses the reaction (2R,3R)-2,3-dihydroxy-3-methylpentanoate + NADP(+) = (S)-2-ethyl-2-hydroxy-3-oxobutanoate + NADPH + H(+). It functions in the pathway amino-acid biosynthesis; L-isoleucine biosynthesis; L-isoleucine from 2-oxobutanoate: step 2/4. Its pathway is amino-acid biosynthesis; L-valine biosynthesis; L-valine from pyruvate: step 2/4. Its function is as follows. Involved in the biosynthesis of branched-chain amino acids (BCAA). Catalyzes an alkyl-migration followed by a ketol-acid reduction of (S)-2-acetolactate (S2AL) to yield (R)-2,3-dihydroxy-isovalerate. In the isomerase reaction, S2AL is rearranged via a Mg-dependent methyl migration to produce 3-hydroxy-3-methyl-2-ketobutyrate (HMKB). In the reductase reaction, this 2-ketoacid undergoes a metal-dependent reduction by NADPH to yield (R)-2,3-dihydroxy-isovalerate. The polypeptide is Ketol-acid reductoisomerase (NADP(+)) (Natronomonas pharaonis (strain ATCC 35678 / DSM 2160 / CIP 103997 / JCM 8858 / NBRC 14720 / NCIMB 2260 / Gabara) (Halobacterium pharaonis)).